The primary structure comprises 429 residues: Cyclin-B2-2 (429 aa).

Residues 66–98 (SQRKQESCDKKKLDSLHPSISRSQEETKKLKPS) form a disordered region. Over residues 68-80 (RKQESCDKKKLDS) the composition is skewed to basic and acidic residues.

It belongs to the cyclin family. Cyclin AB subfamily. Interacts with CDC20-1 and CDC20-2. As to expression, expressed in roots.

The chain is Cyclin-B2-2 (CYCB2-2) from Arabidopsis thaliana (Mouse-ear cress).